A 506-amino-acid chain; its full sequence is Maturase K (506 aa).

This sequence belongs to the intron maturase 2 family. MatK subfamily.

It localises to the plastid. The protein localises to the chloroplast. Its function is as follows. Usually encoded in the trnK tRNA gene intron. Probably assists in splicing its own and other chloroplast group II introns. The polypeptide is Maturase K (Melilotus indicus (Sourclover)).